The chain runs to 815 residues: Lon protease 1 (815 aa).

Positions 19 to 212 (MPLLPLRDIV…KLFGQIRSEI (194 aa)) constitute a Lon N-terminal domain. ATP is bound at residue 364-371 (GPPGVGKT). In terms of domain architecture, Lon proteolytic spans 601-782 (KDEIGLAVGL…DDVLRKAMVV (182 aa)). Active-site residues include Ser-688 and Lys-731. Residues 793–815 (EAGAQQAVMFEQKPPAADEIRAH) form a disordered region.

It belongs to the peptidase S16 family. Homohexamer. Organized in a ring with a central cavity.

It is found in the cytoplasm. The catalysed reaction is Hydrolysis of proteins in presence of ATP.. ATP-dependent serine protease that mediates the selective degradation of mutant and abnormal proteins as well as certain short-lived regulatory proteins. Required for cellular homeostasis and for survival from DNA damage and developmental changes induced by stress. Degrades polypeptides processively to yield small peptide fragments that are 5 to 10 amino acids long. Binds to DNA in a double-stranded, site-specific manner. The protein is Lon protease 1 of Syntrophobacter fumaroxidans (strain DSM 10017 / MPOB).